The chain runs to 228 residues: MHDFLKAFKDAFPHTISIFLGYLLMGMTFGMLLAQQGYDYKVALFMSLFIYAGAIQFVAITLLSAQASLMNVVIVSLLVNARQTCYALSMLDRFKNTKWRLPYLAHALTDETFALLNLYAPKKGVNETDFMFSISLLNHSYWIFGSLVGSLVGSHFSFDTQGMEFVMTAIFIVLFMEQYKRNTNHKNAWLGIAIAVVCLALFGTEYFLLIALVLMVLALILFRKQLEC.

The next 5 membrane-spanning stretches (helical) occupy residues 14–34, 42–62, 130–150, 156–176, and 192–212; these read HTIS…MLLA, VALF…AITL, FMFS…LVGS, FSFD…VLFM, and IAIA…LIAL.

The protein belongs to the AzlC family.

It is found in the cell membrane. This is an uncharacterized protein from Helicobacter pylori (strain J99 / ATCC 700824) (Campylobacter pylori J99).